A 943-amino-acid chain; its full sequence is Protein translocase subunit SecA (943 aa).

ATP-binding positions include Gln90, 108-112, and Asp509; that span reads GEGKT. A disordered region spans residues 534-561; the sequence is KPDNEHKPPIPQQRNSKSGGGFSANVDS.

This sequence belongs to the SecA family. As to quaternary structure, monomer and homodimer. Part of the essential Sec protein translocation apparatus which comprises SecA, SecYEG and auxiliary proteins SecDF. Other proteins may also be involved.

The protein localises to the cell inner membrane. It localises to the cellular thylakoid membrane. The protein resides in the cytoplasm. It carries out the reaction ATP + H2O + cellular proteinSide 1 = ADP + phosphate + cellular proteinSide 2.. In terms of biological role, part of the Sec protein translocase complex. Interacts with the SecYEG preprotein conducting channel. Has a central role in coupling the hydrolysis of ATP to the transfer of proteins into and across the cell membrane, serving as an ATP-driven molecular motor driving the stepwise translocation of polypeptide chains across the membrane. Functionally, probably participates in protein translocation into and across both the cytoplasmic and thylakoid membranes in cyanobacterial cells. The sequence is that of Protein translocase subunit SecA from Prochlorococcus marinus subsp. pastoris (strain CCMP1986 / NIES-2087 / MED4).